The sequence spans 269 residues: Diaminopimelate epimerase (269 aa).

Residues asparagine 15 and asparagine 66 each contribute to the substrate site. Cysteine 75 acts as the Proton donor in catalysis. Substrate-binding positions include 76 to 77 (GN), asparagine 152, asparagine 185, and 203 to 204 (ER). Cysteine 212 (proton acceptor) is an active-site residue. 213 to 214 (GT) provides a ligand contact to substrate.

The protein belongs to the diaminopimelate epimerase family. Homodimer.

Its subcellular location is the cytoplasm. It carries out the reaction (2S,6S)-2,6-diaminopimelate = meso-2,6-diaminopimelate. The protein operates within amino-acid biosynthesis; L-lysine biosynthesis via DAP pathway; DL-2,6-diaminopimelate from LL-2,6-diaminopimelate: step 1/1. Catalyzes the stereoinversion of LL-2,6-diaminopimelate (L,L-DAP) to meso-diaminopimelate (meso-DAP), a precursor of L-lysine and an essential component of the bacterial peptidoglycan. This is Diaminopimelate epimerase from Parabacteroides distasonis (strain ATCC 8503 / DSM 20701 / CIP 104284 / JCM 5825 / NCTC 11152).